A 387-amino-acid polypeptide reads, in one-letter code: Alkanesulfonate monooxygenase (387 aa).

Belongs to the SsuD family.

It carries out the reaction an alkanesulfonate + FMNH2 + O2 = an aldehyde + FMN + sulfite + H2O + 2 H(+). Catalyzes the desulfonation of aliphatic sulfonates. This is Alkanesulfonate monooxygenase from Ralstonia nicotianae (strain ATCC BAA-1114 / GMI1000) (Ralstonia solanacearum).